A 111-amino-acid chain; its full sequence is Large ribosomal subunit protein uL22 (111 aa).

Belongs to the universal ribosomal protein uL22 family. In terms of assembly, part of the 50S ribosomal subunit.

Functionally, this protein binds specifically to 23S rRNA; its binding is stimulated by other ribosomal proteins, e.g. L4, L17, and L20. It is important during the early stages of 50S assembly. It makes multiple contacts with different domains of the 23S rRNA in the assembled 50S subunit and ribosome. The globular domain of the protein is located near the polypeptide exit tunnel on the outside of the subunit, while an extended beta-hairpin is found that lines the wall of the exit tunnel in the center of the 70S ribosome. The polypeptide is Large ribosomal subunit protein uL22 (Polynucleobacter necessarius subsp. necessarius (strain STIR1)).